The primary structure comprises 275 residues: Translation initiation factor 2 subunit alpha (275 aa).

Residues 12–83 form the S1 motif domain; that stretch reads GEFVIATVKS…NKGHIDLSLK (72 aa).

It belongs to the eIF-2-alpha family. Heterotrimer composed of an alpha, a beta and a gamma chain.

In terms of biological role, eIF-2 functions in the early steps of protein synthesis by forming a ternary complex with GTP and initiator tRNA. This Thermococcus onnurineus (strain NA1) protein is Translation initiation factor 2 subunit alpha.